An 853-amino-acid polypeptide reads, in one-letter code: MSLDSEVSVSSSSGRDWFFPSPSFFRSSPSQYGRRFHTNSNTHSAPSSTYPSGIRHRRRVKFSRTPTTSSNEKPQISIVSDKPSAISKNNLNWLSQFGLQFALVTLTIVFLLLLLLRNTHLESQVNKLQGEILRLHACHQLDTLNVSSSTAHKSQDTHPCSCENFKRNLALFLSFMLLLIPLIIFKYIDYVSRSRLSENISEQVSLNKQIAYRVDVFLSVYPYAKPLVLLVATLLLIFLGGLTLFGVTTEDLGHCLWLSWTYVADSGNHASSEGIGPRLVAVSISFGGMLIFAMMLGLVSDAISEKFDSLRKGKSEVVEQNHTLILGWSDKLGSLLNQLAIANESLGGGTIAVMAERDKEDMELDIGKMEFDFKGTSVICRSGSPLILADLKKVSVSKARTIIVLAEDGNADQSDARALRTVLSLTGVKEGLRGHIVVEMSDLDNEVLVKLVGGDLVETVVAHDVIGRLMIQCARQPGLAQIWEDILGFENCEFYIKRWPQLDGMLFEDVLISFPAAIPCGIKVASYGGKIILNPDDSYVLQEGDEVLVIAEDDDTYAPAPLPMVRRGSLPKDFVYPKSPERILFCGWRRDMEDMITVLDASLAPDSELWMFNDVPEKEREKKLIDGGLDISRLENISLVNREGNAVIRRHLESLPLESFDSILILADESVEDSAIQADSRSLATLLLIRDIQARRLPYVAMASQTQGGNFSKGSWIGEMKQASDKTVIISEILDPRTKNLLSMSKISDYVLSNELVSMALAMVAEDRQINDVLEELFAEEGNEMHIRQADIYLREGEEMSFYEIMLRARQRREILIGYRLANAERAVINPPAKTGRRKWSLKDVFVVITEKE.

The span at 1–30 (MSLDSEVSVSSSSGRDWFFPSPSFFRSSPS) shows a compositional bias: low complexity. Residues 1–55 (MSLDSEVSVSSSSGRDWFFPSPSFFRSSPSQYGRRFHTNSNTHSAPSSTYPSGIR) are disordered. The span at 38–51 (TNSNTHSAPSSTYP) shows a compositional bias: polar residues. The chain crosses the membrane as a helical span at residues 96 to 116 (QFGLQFALVTLTIVFLLLLLL). A coiled-coil region spans residues 117–137 (RNTHLESQVNKLQGEILRLHA). 3 consecutive transmembrane segments (helical) span residues 168-188 (NLAL…FKYI), 227-247 (LVLL…LFGV), and 279-299 (LVAV…LGLV). 2 RCK N-terminal domains span residues 320-461 (QNHT…ETVV) and 580-752 (PERI…DYVL).

This sequence belongs to the castor/pollux (TC 1.A.1.23) family. In terms of assembly, homooligomer. In terms of tissue distribution, expressed in infected and uninfected roots, leaves, seed pods, and flower buds.

The protein localises to the nucleus membrane. Ion channel with a moderate preference for potassium over sodium and calcium. Involved in perinuclear calcium spiking but not in cytosolic calcium influx. Closed at negative voltages in presence of magnesium. Required for early signal transduction events leading to endosymbiosis. Acts early in a signal transduction chain leading from the perception of Nod factor to the activation of calcium spiking. Also involved in fungal entry into root epidermal cells during the establishment of the arbuscular mycorrhizal symbiosis. This chain is Ion channel CASTOR (CASTOR), found in Lotus japonicus (Lotus corniculatus var. japonicus).